The sequence spans 859 residues: DNA mismatch repair protein MutS (859 aa).

Gly618–Ser625 lines the ATP pocket. A disordered region spans residues Arg803–Pro829. Low complexity predominate over residues Gln808–Asn819.

Belongs to the DNA mismatch repair MutS family.

Functionally, this protein is involved in the repair of mismatches in DNA. It is possible that it carries out the mismatch recognition step. This protein has a weak ATPase activity. This Shewanella pealeana (strain ATCC 700345 / ANG-SQ1) protein is DNA mismatch repair protein MutS.